We begin with the raw amino-acid sequence, 40 residues long: Bomanin Short 6 (40 aa).

A signal peptide spans 1–18; sequence MKLLSITFLFGLLALASA. Positions 19–23 are cleaved as a propeptide — removed by a dipeptidylpeptidase; sequence NPLSP. An intrachain disulfide couples Cys-32 to Cys-35.

Belongs to the bomanin family.

Its subcellular location is the secreted. Secreted immune-induced peptide induced by Toll signaling. Has a role in resistance to bacterial and fungal infections. The strength of antimicrobial activity appears to correlate with the overall level of expression. The protein is Bomanin Short 6 of Drosophila melanogaster (Fruit fly).